A 447-amino-acid chain; its full sequence is Tubulin beta-2 chain (447 aa).

The GTP site is built by glutamine 11, glutamate 69, serine 138, glycine 142, threonine 143, glycine 144, asparagine 204, and asparagine 226. Glutamate 69 serves as a coordination point for Mg(2+). Over residues 419–428 the composition is skewed to polar residues; that stretch reads VSEYQQYQDA. The disordered stretch occupies residues 419-447; that stretch reads VSEYQQYQDATSDEEGEYEDEDQEPEEDM. A compositionally biased stretch (acidic residues) spans 429–447; the sequence is TSDEEGEYEDEDQEPEEDM.

Belongs to the tubulin family. Dimer of alpha and beta chains. A typical microtubule is a hollow water-filled tube with an outer diameter of 25 nm and an inner diameter of 15 nM. Alpha-beta heterodimers associate head-to-tail to form protofilaments running lengthwise along the microtubule wall with the beta-tubulin subunit facing the microtubule plus end conferring a structural polarity. Microtubules usually have 13 protofilaments but different protofilament numbers can be found in some organisms and specialized cells. Mg(2+) serves as cofactor.

The protein localises to the cytoplasm. It localises to the cytoskeleton. In terms of biological role, tubulin is the major constituent of microtubules, a cylinder consisting of laterally associated linear protofilaments composed of alpha- and beta-tubulin heterodimers. Microtubules grow by the addition of GTP-tubulin dimers to the microtubule end, where a stabilizing cap forms. Below the cap, tubulin dimers are in GDP-bound state, owing to GTPase activity of alpha-tubulin. The chain is Tubulin beta-2 chain (TUBB2) from Triticum aestivum (Wheat).